A 392-amino-acid chain; its full sequence is Putative pectate lyase 21 (392 aa).

A signal peptide spans 1-21 (MSIVCTFFLFLLNTSFAFAFA). An N-linked (GlcNAc...) asparagine glycan is attached at Asn-38. 3 residues coordinate Ca(2+): Asp-189, Asp-213, and Asp-217. Asn-220 is a glycosylation site (N-linked (GlcNAc...) asparagine). Arg-269 is an active-site residue.

Belongs to the polysaccharide lyase 1 family. Requires Ca(2+) as cofactor.

The enzyme catalyses Eliminative cleavage of (1-&gt;4)-alpha-D-galacturonan to give oligosaccharides with 4-deoxy-alpha-D-galact-4-enuronosyl groups at their non-reducing ends.. It participates in glycan metabolism; pectin degradation; 2-dehydro-3-deoxy-D-gluconate from pectin: step 2/5. In Arabidopsis thaliana (Mouse-ear cress), this protein is Putative pectate lyase 21.